The following is a 151-amino-acid chain: Odorant-binding protein (151 aa).

2 cysteine pairs are disulfide-bonded: C38–C42 and C57–C149.

Belongs to the calycin superfamily. Lipocalin family. Expressed in salivary glands, hair and urine.

Its subcellular location is the secreted. In terms of biological role, may act as a pheromone. The polypeptide is Odorant-binding protein (Phodopus sungorus (Striped hairy-footed hamster)).